The chain runs to 1519 residues: Rho guanine nucleotide exchange factor 40 (1519 aa).

Disordered regions lie at residues 194 to 237 (VGHQ…PVEG) and 253 to 503 (RGSP…LETV). The segment covering 200–218 (TLPPELPSGPPGLPSPPLP) has biased composition (pro residues). Serine 262 bears the Phosphoserine mark. Residues 280-290 (KGRHRRHRAWM) are compositionally biased toward basic residues. Low complexity predominate over residues 314–341 (ASPESPPGAEAVPEAAVLEVSEPPAEAV). A compositionally biased stretch (gly residues) spans 355–367 (LRGGGGGGQGAEG). At threonine 371 the chain carries Phosphothreonine. Basic residues predominate over residues 374–386 (RTGKGNRRKKRAA). Serine 419 is modified (phosphoserine). A compositionally biased stretch (basic and acidic residues) spans 421 to 457 (SEHKLPECHLVKEEYEGSGKPESEPKELKTAGEKEPQ). Residues 828–871 (SAEVQERLAQAREALALEENATSQKVLDIFEQRLEQVESGLHRA) are a coiled coil. A phosphoserine mark is found at serine 931 and serine 961. Residues 934–961 (ALREWGRCQARCQELERRIQQHVGEEAS) adopt a coiled-coil conformation. Residues 955 to 1031 (HVGEEASPRG…ELAPEAEGRP (77 aa)) are disordered. The span at 980 to 996 (WGPRSPSPSLSSLLLPS) shows a compositional bias: low complexity. Serine 1082 is subject to Phosphoserine. One can recognise a DH domain in the interval 1085-1253 (AQQRLVSELI…REQEARGRDL (169 aa)). The 108-residue stretch at 1265–1372 (DLKEQGQLLH…WTSSIAQLLW (108 aa)) folds into the PH domain. Residues serine 1433, serine 1438, and serine 1474 each carry the phosphoserine modification. The tract at residues 1466–1519 (TLDSSGDVSPGPRNSPSLQPPHPGSSTPTLASRGILGLSRQSHARALSDPTTPL) is disordered. Residues 1467-1482 (LDSSGDVSPGPRNSPS) show a composition bias toward polar residues. The residue at position 1492 (threonine 1492) is a Phosphothreonine.

In terms of tissue distribution, expressed at higher level in the central nervous system and skeletal muscle and greater abundance in fetal than adult brain (at protein level).

The protein resides in the cytoplasm. Functionally, may act as a guanine nucleotide exchange factor (GEF). This is Rho guanine nucleotide exchange factor 40 (ARHGEF40) from Homo sapiens (Human).